A 188-amino-acid polypeptide reads, in one-letter code: dCTP deaminase (188 aa).

DCTP-binding positions include 111–116 (KSTYAR), 135–137 (TLE), Q156, Y170, and Q180. The active-site Proton donor/acceptor is the E137.

Belongs to the dCTP deaminase family. Homotrimer.

The catalysed reaction is dCTP + H2O + H(+) = dUTP + NH4(+). It functions in the pathway pyrimidine metabolism; dUMP biosynthesis; dUMP from dCTP (dUTP route): step 1/2. Catalyzes the deamination of dCTP to dUTP. In Laribacter hongkongensis (strain HLHK9), this protein is dCTP deaminase.